A 403-amino-acid chain; its full sequence is L-cysteine:1D-myo-inositol 2-amino-2-deoxy-alpha-D-glucopyranoside ligase (403 aa).

C43 contributes to the Zn(2+) binding site. L-cysteinyl-5'-AMP is bound by residues 43 to 46 (CGIT), T58, 81 to 83 (NVT), and W223. Residues 45-55 (ITPYDATHLGH) carry the 'HIGH' region motif. C227 serves as a coordination point for Zn(2+). 245–247 (GAD) serves as a coordination point for L-cysteinyl-5'-AMP. Zn(2+) is bound at residue H252. An L-cysteinyl-5'-AMP-binding site is contributed by V278. The 'KMSKS' region signature appears at 284-288 (KMSKS).

It belongs to the class-I aminoacyl-tRNA synthetase family. MshC subfamily. As to quaternary structure, monomer. The cofactor is Zn(2+).

It carries out the reaction 1D-myo-inositol 2-amino-2-deoxy-alpha-D-glucopyranoside + L-cysteine + ATP = 1D-myo-inositol 2-(L-cysteinylamino)-2-deoxy-alpha-D-glucopyranoside + AMP + diphosphate + H(+). In terms of biological role, catalyzes the ATP-dependent condensation of GlcN-Ins and L-cysteine to form L-Cys-GlcN-Ins. The sequence is that of L-cysteine:1D-myo-inositol 2-amino-2-deoxy-alpha-D-glucopyranoside ligase from Acidothermus cellulolyticus (strain ATCC 43068 / DSM 8971 / 11B).